Here is a 97-residue protein sequence, read N- to C-terminus: Exodeoxyribonuclease 7 small subunit (97 aa).

The segment at 1–21 (MAKTATPGACASDPGSGPLPE) is disordered.

Belongs to the XseB family. As to quaternary structure, heterooligomer composed of large and small subunits.

It localises to the cytoplasm. It carries out the reaction Exonucleolytic cleavage in either 5'- to 3'- or 3'- to 5'-direction to yield nucleoside 5'-phosphates.. Its function is as follows. Bidirectionally degrades single-stranded DNA into large acid-insoluble oligonucleotides, which are then degraded further into small acid-soluble oligonucleotides. The chain is Exodeoxyribonuclease 7 small subunit from Burkholderia mallei (strain NCTC 10247).